We begin with the raw amino-acid sequence, 142 residues long: Two-component response regulator ARR22 (142 aa).

The Response regulatory domain maps to 23-140 (NVLIVDDDPL…KIFPLISHLF (118 aa)). Position 74 is a 4-aspartylphosphate (Asp74).

The protein belongs to the ARR family. Type-A subfamily. Post-translationally, two-component system major event consists of a His-to-Asp phosphorelay between a sensor histidine kinase (HK) and a response regulator (RR). In plants, the His-to-Asp phosphorelay involves an additional intermediate named Histidine-containing phosphotransfer protein (HPt). This multistep phosphorelay consists of a His-Asp-His-Asp sequential transfer of a phosphate group between first a His and an Asp of the HK protein, followed by the transfer to a conserved His of the HPt protein and finally the transfer to an Asp in the receiver domain of the RR protein.

Its subcellular location is the nucleus. Its function is as follows. Functions as a response regulator involved in His-to-Asp phosphorelay signal transduction system. Phosphorylation of the Asp residue in the receiver domain activates the ability of the protein to promote the transcription of target genes. Type-A response regulators seem to act as negative regulators of the cytokinin signaling. The polypeptide is Two-component response regulator ARR22 (ARR22) (Arabidopsis thaliana (Mouse-ear cress)).